Here is a 177-residue protein sequence, read N- to C-terminus: NAD(P)H-quinone oxidoreductase subunit 6, chloroplastic (177 aa).

5 helical membrane-spanning segments follow: residues 10 to 30 (ILLV…VLLT), 32 to 52 (PIYS…FYIP), 61 to 81 (AQLL…VMFM), 92 to 112 (FWTV…FSLI), and 152 to 172 (FYLP…GAIA).

The protein belongs to the complex I subunit 6 family. NDH is composed of at least 16 different subunits, 5 of which are encoded in the nucleus.

The protein resides in the plastid. Its subcellular location is the chloroplast thylakoid membrane. It carries out the reaction a plastoquinone + NADH + (n+1) H(+)(in) = a plastoquinol + NAD(+) + n H(+)(out). The catalysed reaction is a plastoquinone + NADPH + (n+1) H(+)(in) = a plastoquinol + NADP(+) + n H(+)(out). In terms of biological role, NDH shuttles electrons from NAD(P)H:plastoquinone, via FMN and iron-sulfur (Fe-S) centers, to quinones in the photosynthetic chain and possibly in a chloroplast respiratory chain. The immediate electron acceptor for the enzyme in this species is believed to be plastoquinone. Couples the redox reaction to proton translocation, and thus conserves the redox energy in a proton gradient. The polypeptide is NAD(P)H-quinone oxidoreductase subunit 6, chloroplastic (ndhG) (Nymphaea alba (White water-lily)).